The chain runs to 284 residues: MVSKIIKLGVPTATLAVGTLLLGDDEKRSAFFRTASAFTQNHGHKTFDEHFPRGEWDKNWDFRDPISLVDKGKWEKADEEGKKKLIEEKKATATRNIFLIRHGQYHLDHEVKMLTPLGREQAELLGKRLANSDIKFTNMTMSTMVRATETANIILKHLPDDLTRTSSPFIEEGPPYPPVPDHKTWRPLDPEFYTEAARIESAYRKIFHRASPSQKEDSFELIVCHANVIRYFICRALQFPPEGWLRMSLGNCSLTWITIRPKGHVSVRSIGDIGHLPPNKISFT.

A helical transmembrane segment spans residues 8-24; it reads LGVPTATLAVGTLLLGD.

Belongs to the phosphoglycerate mutase family. BPG-dependent PGAM subfamily. As to quaternary structure, interacts with skn-1 isoforms a and c.

It localises to the mitochondrion outer membrane. It catalyses the reaction O-phospho-L-seryl-[protein] + H2O = L-seryl-[protein] + phosphate. The enzyme catalyses O-phospho-L-threonyl-[protein] + H2O = L-threonyl-[protein] + phosphate. Displays phosphatase activity for serine/threonine residues. Has apparently no phosphoglycerate mutase activity. This Caenorhabditis elegans protein is Serine/threonine-protein phosphatase Pgam5, mitochondrial (pgam-5).